Consider the following 141-residue polypeptide: UPF0225 protein Rmet_0111 (141 aa).

Belongs to the UPF0225 family.

This chain is UPF0225 protein Rmet_0111, found in Cupriavidus metallidurans (strain ATCC 43123 / DSM 2839 / NBRC 102507 / CH34) (Ralstonia metallidurans).